Consider the following 345-residue polypeptide: Protein CHROMOSOME TRANSMISSION FIDELITY 7 (345 aa).

The CCHH-type zinc-finger motif lies at 96–120; the sequence is RHCAECGAKYAPGDELDEKNHQSFH.

The protein belongs to the acetyltransferase family. ECO subfamily. Autoacetylated. Expressed in roots, stems, leaves, young seedlings and flower buds. Detected in the embryo, but not in the endosperm.

It is found in the nucleus. Its subcellular location is the cytoplasm. Its function is as follows. Acetyltransferase required for the establishment of sister chromatid cohesion. Involved in preservation of genome integrity and meiosis. Required for DNA repair and for the regulation of chromosome segregation during mitotic cell division. Knock-down mutants are extremely dwarf. Regulator of sister chromatid cohesion in meiosis which negatively regulates cohesin association with chromatin, acting as an antagonist of WAPL1 and WAPL2. The protein is Protein CHROMOSOME TRANSMISSION FIDELITY 7 of Arabidopsis thaliana (Mouse-ear cress).